The sequence spans 1060 residues: Desmoglein-1-beta (1060 aa).

An N-terminal signal peptide occupies residues 1–23 (MDWHSFRIAALLLTSLVVLEVNS). A propeptide spanning residues 24–49 (EFQIQVRDHNAKNGTIKWHSIRRQKR) is cleaved from the precursor. 4 Cadherin domains span residues 50–157 (EWIK…PPVF), 158–269 (SMTT…IPYL), 270–389 (EQSS…RPGS), and 386–493 (RPGS…PGSD). Residues 50–567 (EWIKFAAACR…ITEDNVHFGP (518 aa)) are Extracellular-facing. Asn-110 carries N-linked (GlcNAc...) (high mannose) asparagine glycosylation. N-linked (GlcNAc...) asparagine glycosylation occurs at Asn-180. The segment at 490-560 (PGSDGGGSSS…PEPEPFDITE (71 aa)) is disordered. Positions 492 to 503 (SDGGGSSSGSGG) are enriched in gly residues. The segment covering 510–519 (NGYQGTSTVG) has biased composition (polar residues). Gly residues predominate over residues 525–537 (GSGGVTSSGGGSG). Residues 549-560 (DEPEPEPFDITE) show a composition bias toward acidic residues. A helical transmembrane segment spans residues 568–588 (AGIGLLIMGFLVLGLVPFLLI). The Cytoplasmic portion of the chain corresponds to 589 to 1060 (CCDCGGAPGG…TKYSTVQYSK (472 aa)). The segment covering 792–801 (PDPDSSWPPQ) has biased composition (low complexity). The segment at 792 to 811 (PDPDSSWPPQSTEPMCPQST) is disordered. Desmoglein repeat repeat units follow at residues 835–861 (AYPS…TVRE), 862–891 (SYAT…ERVV), 892–921 (GPVP…ERVI), 922–949 (APGS…ERVI), and 950–978 (QPTS…ERVV).

As to quaternary structure, interacts with DSC3; there is evidence to suggest that the interaction promotes cell-cell adhesion of keratinocytes. Expressed in epidermis.

It is found in the cell membrane. It localises to the cell junction. The protein resides in the desmosome. Its subcellular location is the cytoplasm. The protein localises to the nucleus. In terms of biological role, component of intercellular desmosome junctions. Involved in the interaction of plaque proteins and intermediate filaments mediating cell-cell adhesion. This chain is Desmoglein-1-beta (Dsg1b), found in Mus musculus (Mouse).